We begin with the raw amino-acid sequence, 890 residues long: Nucleoside hydrolase 3 (890 aa).

Residues 1–21 (MLTSPTLKSLWFLFTILGLLG) form the signal peptide. N-linked (GlcNAc...) asparagine glycosylation is found at Asn-55, Asn-232, Asn-371, Asn-485, Asn-580, Asn-655, and Asn-740.

It belongs to the IUNH family.

The protein localises to the secreted. It is found in the extracellular space. The protein resides in the apoplast. It catalyses the reaction a purine D-ribonucleoside + H2O = a purine nucleobase + D-ribose. The enzyme catalyses inosine + H2O = hypoxanthine + D-ribose. It carries out the reaction adenosine + H2O = D-ribose + adenine. Functionally, extracellular purine-specific hydrolase present in the apoplastic fluid involved in the degradation of extracellular nucleosides, including inosine and adenosine, and which may participate in wound and pathogen responses (e.g. Botrytis cinerea). This Arabidopsis thaliana (Mouse-ear cress) protein is Nucleoside hydrolase 3.